Reading from the N-terminus, the 425-residue chain is Putative chloroquine resistance transporter (425 aa).

The Cytoplasmic portion of the chain corresponds to 1 to 56 (MTGIKKGKNKKKNMKNDDRYKELDSLITNGSEIGNNSGRSCVKRFFKIIGNEMKNN). Residues 57-77 (VYVYLLSILYLCVCVMNKVFA) traverse the membrane as a helical segment. At 78–88 (KRTLNKMGNYS) the chain is on the vacuolar side. Asn86 is a glycosylation site (N-linked (GlcNAc...) asparagine). The chain crosses the membrane as a helical span at residues 89–109 (FVTSETHNIICIIVFQLLYFI). Topologically, residues 110–126 (YRKTSSSSVYKNESQKN) are cytoplasmic. A helical transmembrane segment spans residues 127–147 (FGWQFFLISLLDASTVIISMI). Topologically, residues 148–157 (GLTRTTGNIQ) are vacuolar. The helical transmembrane segment at 158 to 178 (SFIMQLIIPVNMYFWFMFLGY) threads the bilayer. Topologically, residues 179–181 (RYH) are cytoplasmic. A helical transmembrane segment spans residues 182-202 (LFNYLGAFIILITIAVVETFL). Topologically, residues 203-210 (SFETQGEN) are vacuolar. Residues 211–231 (SIIFNLIMISAFNTLSFSNMT) traverse the membrane as a helical segment. Over 232–249 (REVVFKKHKINILRLNAM) the chain is Cytoplasmic. A helical transmembrane segment spans residues 250 to 270 (VVLFQFFTSLLVLPVYNIPFL). Over 271–318 (KEIYMPFSEMSTNINNGLRCLFYGENTIVENCGVGMVKMCDNCEGAWK) the chain is Vacuolar. Cystine bridges form between Cys290/Cys313 and Cys302/Cys310. The chain crosses the membrane as a helical span at residues 319–339 (TFITFSFFNICDNLLACYIID). Topologically, residues 340 to 347 (KFSTMTYT) are cytoplasmic. Residues 348-368 (IVSCIQGPAITIAYYFKFLAG) traverse the membrane as a helical segment. Topologically, residues 369–378 (DAVRKPRILD) are vacuolar. The chain crosses the membrane as a helical span at residues 379 to 399 (FLTLFGYLFGTIIYRIGNIIL). The Cytoplasmic segment spans residues 400–425 (EKKQVIKSQNSNDSEAELTSIETSRA).

Belongs to the CRT-like transporter family.

It localises to the vacuole membrane. In terms of biological role, nutrient transporter. Involved in maintaining the osmotic homeostasis of the digestive vacuole. This is Putative chloroquine resistance transporter from Plasmodium berghei.